A 214-amino-acid polypeptide reads, in one-letter code: Cytochrome b (214 aa).

The next 4 membrane-spanning stretches (helical) occupy residues 31 to 51 (FGSM…FLAI), 75 to 96 (WTMQ…YIHI), 111 to 131 (WLSG…GYVL), and 176 to 196 (FFAL…AHIM). Histidine 81 and histidine 95 together coordinate heme b. Heme b-binding residues include histidine 180 and histidine 194. Histidine 199 lines the a ubiquinone pocket.

This sequence belongs to the cytochrome b family. The cytochrome bc1 complex contains 3 respiratory subunits (MT-CYB, CYC1 and UQCRFS1), 2 core proteins (UQCRC1 and UQCRC2) and probably 6 low-molecular weight proteins. Heme b serves as cofactor.

The protein localises to the mitochondrion inner membrane. Component of the ubiquinol-cytochrome c reductase complex (complex III or cytochrome b-c1 complex) that is part of the mitochondrial respiratory chain. The b-c1 complex mediates electron transfer from ubiquinol to cytochrome c. Contributes to the generation of a proton gradient across the mitochondrial membrane that is then used for ATP synthesis. The polypeptide is Cytochrome b (MT-CYB) (Elapsoidea semiannulata (Angolan garter snake)).